Consider the following 334-residue polypeptide: Aspartate carbamoyltransferase catalytic subunit (334 aa).

Residues Arg71 and Thr72 each coordinate carbamoyl phosphate. Position 99 (Lys99) interacts with L-aspartate. Residues Arg121, His151, and Gln154 each contribute to the carbamoyl phosphate site. Arg184 and Arg239 together coordinate L-aspartate. Positions 280 and 281 each coordinate carbamoyl phosphate.

Belongs to the aspartate/ornithine carbamoyltransferase superfamily. ATCase family. Heterododecamer (2C3:3R2) of six catalytic PyrB chains organized as two trimers (C3), and six regulatory PyrI chains organized as three dimers (R2).

It catalyses the reaction carbamoyl phosphate + L-aspartate = N-carbamoyl-L-aspartate + phosphate + H(+). It participates in pyrimidine metabolism; UMP biosynthesis via de novo pathway; (S)-dihydroorotate from bicarbonate: step 2/3. Its function is as follows. Catalyzes the condensation of carbamoyl phosphate and aspartate to form carbamoyl aspartate and inorganic phosphate, the committed step in the de novo pyrimidine nucleotide biosynthesis pathway. This is Aspartate carbamoyltransferase catalytic subunit from Pseudomonas putida (Arthrobacter siderocapsulatus).